The chain runs to 214 residues: Redox-sensing transcriptional repressor Rex (214 aa).

Positions 17–56 (LYYRIFKRFHADQVEKASSKQIADAMGIDSATVRRDFSYF) form a DNA-binding region, H-T-H motif. An NAD(+)-binding site is contributed by 91–96 (GCGNIG).

The protein belongs to the transcriptional regulatory Rex family. Homodimer.

It is found in the cytoplasm. Modulates transcription in response to changes in cellular NADH/NAD(+) redox state. This chain is Redox-sensing transcriptional repressor Rex, found in Streptococcus pyogenes serotype M1.